Here is a 185-residue protein sequence, read N- to C-terminus: ATP-dependent protease subunit HslV (185 aa).

Threonine 2 is a catalytic residue. Residues glycine 157, cysteine 160, and threonine 163 each contribute to the Na(+) site.

This sequence belongs to the peptidase T1B family. HslV subfamily. A double ring-shaped homohexamer of HslV is capped on each side by a ring-shaped HslU homohexamer. The assembly of the HslU/HslV complex is dependent on binding of ATP.

It localises to the cytoplasm. It catalyses the reaction ATP-dependent cleavage of peptide bonds with broad specificity.. Its activity is regulated as follows. Allosterically activated by HslU binding. Its function is as follows. Protease subunit of a proteasome-like degradation complex believed to be a general protein degrading machinery. This Vibrio cholerae serotype O1 (strain ATCC 39315 / El Tor Inaba N16961) protein is ATP-dependent protease subunit HslV.